Reading from the N-terminus, the 435-residue chain is Gamma-glutamyl phosphate reductase (435 aa).

It belongs to the gamma-glutamyl phosphate reductase family.

The protein localises to the cytoplasm. It carries out the reaction L-glutamate 5-semialdehyde + phosphate + NADP(+) = L-glutamyl 5-phosphate + NADPH + H(+). It participates in amino-acid biosynthesis; L-proline biosynthesis; L-glutamate 5-semialdehyde from L-glutamate: step 2/2. Functionally, catalyzes the NADPH-dependent reduction of L-glutamate 5-phosphate into L-glutamate 5-semialdehyde and phosphate. The product spontaneously undergoes cyclization to form 1-pyrroline-5-carboxylate. This is Gamma-glutamyl phosphate reductase from Synechococcus sp. (strain WH7803).